Reading from the N-terminus, the 193-residue chain is Probable GTP-binding protein EngB (193 aa).

The 172-residue stretch at 22–193 folds into the EngB-type G domain; the sequence is GLPEFAFAGR…LIAVLESYLA (172 aa). GTP is bound by residues 30 to 37, 57 to 61, 75 to 78, 142 to 145, and 173 to 175; these read GRSNVGKS, GKTQG, DLPG, TKID, and FSS. Mg(2+) is bound by residues serine 37 and threonine 59.

Belongs to the TRAFAC class TrmE-Era-EngA-EngB-Septin-like GTPase superfamily. EngB GTPase family. Mg(2+) is required as a cofactor.

Necessary for normal cell division and for the maintenance of normal septation. This is Probable GTP-binding protein EngB from Desulfotalea psychrophila (strain LSv54 / DSM 12343).